The sequence spans 189 residues: UPF0312 protein VC_A0539 (189 aa).

Positions 1–22 (MKKTLMAVGLAAVMSIPFAANA) are cleaved as a signal peptide.

The protein belongs to the UPF0312 family. Type 1 subfamily.

Its subcellular location is the periplasm. The polypeptide is UPF0312 protein VC_A0539 (Vibrio cholerae serotype O1 (strain ATCC 39315 / El Tor Inaba N16961)).